The primary structure comprises 842 residues: Elongation factor G, mitochondrial (842 aa).

Residues 1–58 constitute a mitochondrion transit peptide; the sequence is MVAIPRVAAARSLARQLARQSLRTTSFASAPVRIAIASTPLARSPSSFRSLSSSTRRS. The region spanning 93–398 is the tr-type G domain; the sequence is VRQRNVGISA…GVCSYLPNPA (306 aa). Residues 102-109, 196-200, and 250-253 each bind GTP; these read AHIDSGKT, DTPGH, and NKMD. The interval 423–442 is disordered; that stretch reads AGEDQEAAAEARKNAAPPVL.

This sequence belongs to the TRAFAC class translation factor GTPase superfamily. Classic translation factor GTPase family. EF-G/EF-2 subfamily.

It is found in the mitochondrion. It participates in protein biosynthesis; polypeptide chain elongation. Its function is as follows. Mitochondrial GTPase that catalyzes the GTP-dependent ribosomal translocation step during translation elongation. During this step, the ribosome changes from the pre-translocational (PRE) to the post-translocational (POST) state as the newly formed A-site-bound peptidyl-tRNA and P-site-bound deacylated tRNA move to the P and E sites, respectively. Catalyzes the coordinated movement of the two tRNA molecules, the mRNA and conformational changes in the ribosome. This is Elongation factor G, mitochondrial from Mycosarcoma maydis (Corn smut fungus).